Here is a 402-residue protein sequence, read N- to C-terminus: Nicotinate phosphoribosyltransferase (402 aa).

At His226 the chain carries Phosphohistidine; by autocatalysis.

It belongs to the NAPRTase family. In terms of processing, transiently phosphorylated on a His residue during the reaction cycle. Phosphorylation strongly increases the affinity for substrates and increases the rate of nicotinate D-ribonucleotide production. Dephosphorylation regenerates the low-affinity form of the enzyme, leading to product release.

It catalyses the reaction nicotinate + 5-phospho-alpha-D-ribose 1-diphosphate + ATP + H2O = nicotinate beta-D-ribonucleotide + ADP + phosphate + diphosphate. Its pathway is cofactor biosynthesis; NAD(+) biosynthesis; nicotinate D-ribonucleotide from nicotinate: step 1/1. Its function is as follows. Catalyzes the synthesis of beta-nicotinate D-ribonucleotide from nicotinate and 5-phospho-D-ribose 1-phosphate at the expense of ATP. This Chromobacterium violaceum (strain ATCC 12472 / DSM 30191 / JCM 1249 / CCUG 213 / NBRC 12614 / NCIMB 9131 / NCTC 9757 / MK) protein is Nicotinate phosphoribosyltransferase.